We begin with the raw amino-acid sequence, 153 residues long: Small ribosomal subunit protein uS11 (153 aa).

It belongs to the universal ribosomal protein uS11 family.

This is Small ribosomal subunit protein uS11 (RPS14) from Chlamydomonas reinhardtii (Chlamydomonas smithii).